Reading from the N-terminus, the 343-residue chain is Aspartate beta-hydroxylase domain-containing protein 2 (343 aa).

Residues 1–31 (MWLEWLVAWSWSLDGLRDCIATGIQSVRDCD) lie on the Cytoplasmic side of the membrane. Residues 32-52 (GTAVITVACLLILFVWYCYHV) form a helical membrane-spanning segment. The Lumenal portion of the chain corresponds to 53–343 (GREQPRPHVS…ALDFIFAPGR (291 aa)). N-linked (GlcNAc...) asparagine glycans are attached at residues Asn-77 and Asn-185. Residues Trp-202 and Ser-246 each coordinate 2-oxoglutarate. His-257 provides a ligand contact to Fe cation. Residue 266–268 (RCH) coordinates 2-oxoglutarate. His-302 is a Fe cation binding site. Arg-315 lines the 2-oxoglutarate pocket.

Belongs to the aspartyl/asparaginyl beta-hydroxylase family. Requires Fe cation as cofactor.

The protein resides in the membrane. In terms of biological role, may function as 2-oxoglutarate-dependent dioxygenase. This is Aspartate beta-hydroxylase domain-containing protein 2 (Asphd2) from Mus musculus (Mouse).